A 313-amino-acid polypeptide reads, in one-letter code: Beta-lactamase FAR-1 (313 aa).

The first 28 residues, 1-28 (MPGVDISFLKKSGRRTMAAAAVIALLGG), serve as a signal peptide directing secretion. Cys-29 carries the N-palmitoyl cysteine lipid modification. Cys-29 carries the S-diacylglycerol cysteine lipid modification. Ser-94 serves as the catalytic Acyl-ester intermediate. A substrate-binding site is contributed by Ser-154. The active-site Proton acceptor is Glu-190. 258–260 (KTG) serves as a coordination point for substrate.

This sequence belongs to the class-A beta-lactamase family.

The protein localises to the cell membrane. The enzyme catalyses a beta-lactam + H2O = a substituted beta-amino acid. Its activity is regulated as follows. Inhibited by clavulanic acid, and at a low level by tazobactam and sulbactam. Functionally, confers high levels of resistance to amoxicillin, benzylpenicillin, piperacillin, ticarcillin and cephalothin. Also hydrolyzes aztreonam at a low level. Not active against ceftazidime, cefotaxime and imipenem. The polypeptide is Beta-lactamase FAR-1 (bla) (Nocardia farcinica (strain IFM 10152)).